The sequence spans 64 residues: Large ribosomal subunit protein bL35 (64 aa).

The protein belongs to the bacterial ribosomal protein bL35 family.

The chain is Large ribosomal subunit protein bL35 from Ectopseudomonas mendocina (strain ymp) (Pseudomonas mendocina).